Consider the following 165-residue polypeptide: uncharacterized protein (165 aa).

Positions 49–165 are disordered; it reads QLKPQGPKRP…VAQQREIAQK (117 aa). Residues 94 to 106 are compositionally biased toward polar residues; that stretch reads MNNNNNYKISYTS. Residues 120–135 show a composition bias toward low complexity; it reads TLQRTTPQAQPTPQQP. Over residues 139–157 the composition is skewed to polar residues; that stretch reads SRSSGGITGAVNNRPQMVA.

This is an uncharacterized protein from Caenorhabditis elegans.